The following is a 556-amino-acid chain: CDP-diacylglycerol--glycerol-3-phosphate 3-phosphatidyltransferase, mitochondrial (556 aa).

A mitochondrion-targeting transit peptide spans 1–28 (MAVAAAAAAGPVFWRRLLGLLPGRPGLA). Residue S49 is modified to Phosphoserine. 124-131 (ASLYLGTG) provides a ligand contact to ATP. PLD phosphodiesterase domains are found at residues 215–241 (TIGL…SDSY) and 460–493 (RGWT…GYRS). Active-site residues include H220, K222, and D227.

It belongs to the CDP-alcohol phosphatidyltransferase class-II family.

Its subcellular location is the mitochondrion. It carries out the reaction a CDP-1,2-diacyl-sn-glycerol + sn-glycerol 3-phosphate = a 1,2-diacyl-sn-glycero-3-phospho-(1'-sn-glycero-3'-phosphate) + CMP + H(+). It participates in phospholipid metabolism; phosphatidylglycerol biosynthesis; phosphatidylglycerol from CDP-diacylglycerol: step 1/2. Activated by calcium and magnesium and inhibited by other bivalent cations. Its function is as follows. Functions in the biosynthesis of the anionic phospholipids phosphatidylglycerol and cardiolipin. The polypeptide is CDP-diacylglycerol--glycerol-3-phosphate 3-phosphatidyltransferase, mitochondrial (PGS1) (Pongo abelii (Sumatran orangutan)).